The sequence spans 364 residues: Dual-specificity RNA methyltransferase RlmN (364 aa).

Glu93 acts as the Proton acceptor in catalysis. Residues 99–337 enclose the Radical SAM core domain; that stretch reads EDDRGTLCIS…ATIRKTRGDD (239 aa). Cys106 and Cys342 are oxidised to a cystine. [4Fe-4S] cluster is bound by residues Cys113, Cys117, and Cys120. S-adenosyl-L-methionine contacts are provided by residues 167 to 168, Ser199, 221 to 223, and Asn299; these read GE and SLH. Cys342 functions as the S-methylcysteine intermediate in the catalytic mechanism.

It belongs to the radical SAM superfamily. RlmN family. The cofactor is [4Fe-4S] cluster.

The protein resides in the cytoplasm. The enzyme catalyses adenosine(2503) in 23S rRNA + 2 reduced [2Fe-2S]-[ferredoxin] + 2 S-adenosyl-L-methionine = 2-methyladenosine(2503) in 23S rRNA + 5'-deoxyadenosine + L-methionine + 2 oxidized [2Fe-2S]-[ferredoxin] + S-adenosyl-L-homocysteine. The catalysed reaction is adenosine(37) in tRNA + 2 reduced [2Fe-2S]-[ferredoxin] + 2 S-adenosyl-L-methionine = 2-methyladenosine(37) in tRNA + 5'-deoxyadenosine + L-methionine + 2 oxidized [2Fe-2S]-[ferredoxin] + S-adenosyl-L-homocysteine. In terms of biological role, specifically methylates position 2 of adenine 2503 in 23S rRNA and position 2 of adenine 37 in tRNAs. m2A2503 modification seems to play a crucial role in the proofreading step occurring at the peptidyl transferase center and thus would serve to optimize ribosomal fidelity. The sequence is that of Dual-specificity RNA methyltransferase RlmN from Dichelobacter nodosus (strain VCS1703A).